A 345-amino-acid chain; its full sequence is MFSSLYPLARASLFKMDAEDAHHLTLRALGAAGRTGLACALSARVPDAPRTVMGLTFRNPVGLAAGLDKDGAAIDGLASLGFGFIEVGTVTPRPQPGNPRPRMFRLPQADALINRMGFNNHGVDQFVKNVQAARYRGILGLNIGKNADTPIERAAEDYLYCLERVYPFASYVTINISSPNTKNLRQLQGAGELDALLAALKDKQQRLADLHGKLVPLALKIAPDLDDEQVKEIGDTLLRHKIEAVIATNTTLSRAAVQGLPHADEAGGLSGRPVFDASNEVIRKLHAEVGSAVPIIGVGGIFSGEDARVKLAAGASLVQLYTGFIYRGPALVAECVKAIARERTA.

FMN-binding positions include 65 to 69 (AGLDK) and Thr-89. Position 69 (Lys-69) interacts with substrate. 114–118 (NRMGF) provides a ligand contact to substrate. FMN-binding residues include Asn-142 and Asn-175. Asn-175 contributes to the substrate binding site. The active-site Nucleophile is Ser-178. Asn-180 serves as a coordination point for substrate. Lys-220 and Thr-248 together coordinate FMN. 249 to 250 (NT) lines the substrate pocket. Residues Gly-271, Gly-300, and 321 to 322 (YT) contribute to the FMN site.

The protein belongs to the dihydroorotate dehydrogenase family. Type 2 subfamily. As to quaternary structure, monomer. The cofactor is FMN.

It localises to the cell membrane. The enzyme catalyses (S)-dihydroorotate + a quinone = orotate + a quinol. Its pathway is pyrimidine metabolism; UMP biosynthesis via de novo pathway; orotate from (S)-dihydroorotate (quinone route): step 1/1. Catalyzes the conversion of dihydroorotate to orotate with quinone as electron acceptor. The protein is Dihydroorotate dehydrogenase (quinone) of Burkholderia ambifaria (strain ATCC BAA-244 / DSM 16087 / CCUG 44356 / LMG 19182 / AMMD) (Burkholderia cepacia (strain AMMD)).